The sequence spans 248 residues: DNA repair protein RecO (248 aa).

It belongs to the RecO family.

In terms of biological role, involved in DNA repair and RecF pathway recombination. This chain is DNA repair protein RecO, found in Bacillus cereus (strain 03BB102).